Consider the following 63-residue polypeptide: Large ribosomal subunit protein uL29 (63 aa).

This sequence belongs to the universal ribosomal protein uL29 family.

The chain is Large ribosomal subunit protein uL29 from Yersinia enterocolitica serotype O:8 / biotype 1B (strain NCTC 13174 / 8081).